A 167-amino-acid chain; its full sequence is Photosystem I assembly protein Ycf3 (167 aa).

TPR repeat units lie at residues 35 to 68, 72 to 105, and 120 to 153; these read AFTY…EIDP, SYIL…NPSL, and GEQA…APSN.

Belongs to the Ycf3 family.

Its subcellular location is the plastid. It localises to the chloroplast thylakoid membrane. Its function is as follows. Essential for the assembly of the photosystem I (PSI) complex. May act as a chaperone-like factor to guide the assembly of the PSI subunits. This Marchantia polymorpha (Common liverwort) protein is Photosystem I assembly protein Ycf3.